Here is a 642-residue protein sequence, read N- to C-terminus: Threonine--tRNA ligase (642 aa).

The TGS domain maps to 1–61 (MPVITLPDGS…ENDATLAIIT (61 aa)). The interval 243-534 (DHRKIGKQLD…LTEEFAGFFP (292 aa)) is catalytic. The Zn(2+) site is built by Cys334, His385, and His511.

The protein belongs to the class-II aminoacyl-tRNA synthetase family. Homodimer. Requires Zn(2+) as cofactor.

It is found in the cytoplasm. It carries out the reaction tRNA(Thr) + L-threonine + ATP = L-threonyl-tRNA(Thr) + AMP + diphosphate + H(+). Functionally, catalyzes the attachment of threonine to tRNA(Thr) in a two-step reaction: L-threonine is first activated by ATP to form Thr-AMP and then transferred to the acceptor end of tRNA(Thr). Also edits incorrectly charged L-seryl-tRNA(Thr). This Salmonella dublin (strain CT_02021853) protein is Threonine--tRNA ligase.